We begin with the raw amino-acid sequence, 465 residues long: Iron-sulfur cluster assembly SufBD family protein SAR0880 (465 aa).

This sequence belongs to the iron-sulfur cluster assembly SufBD family.

The polypeptide is Iron-sulfur cluster assembly SufBD family protein SAR0880 (Staphylococcus aureus (strain MRSA252)).